The following is a 352-amino-acid chain: Heat-inducible transcription repressor HrcA (352 aa).

It belongs to the HrcA family.

In terms of biological role, negative regulator of class I heat shock genes (grpE-dnaK-dnaJ and groELS operons). Prevents heat-shock induction of these operons. The sequence is that of Heat-inducible transcription repressor HrcA from Prochlorococcus marinus (strain MIT 9313).